Reading from the N-terminus, the 213-residue chain is Coiled-coil domain-containing protein 43 (213 aa).

The stretch at Arg-119–Thr-206 forms a coiled coil. Residues Tyr-127–Arg-213 form a disordered region. Residues Thr-131 to Gln-142 show a composition bias toward acidic residues. Residues Gln-169–Asp-200 show a composition bias toward basic and acidic residues. The segment covering Lys-201–Arg-213 has biased composition (basic residues).

This sequence belongs to the CCDC43 family.

This chain is Coiled-coil domain-containing protein 43 (ccdc43), found in Danio rerio (Zebrafish).